The following is a 245-amino-acid chain: NAD(P)H-quinone oxidoreductase subunit K (245 aa).

Positions 58, 59, 123, and 154 each coordinate [4Fe-4S] cluster.

This sequence belongs to the complex I 20 kDa subunit family. NDH-1 can be composed of about 15 different subunits; different subcomplexes with different compositions have been identified which probably have different functions. Requires [4Fe-4S] cluster as cofactor.

It localises to the cellular thylakoid membrane. It carries out the reaction a plastoquinone + NADH + (n+1) H(+)(in) = a plastoquinol + NAD(+) + n H(+)(out). The catalysed reaction is a plastoquinone + NADPH + (n+1) H(+)(in) = a plastoquinol + NADP(+) + n H(+)(out). NDH-1 shuttles electrons from an unknown electron donor, via FMN and iron-sulfur (Fe-S) centers, to quinones in the respiratory and/or the photosynthetic chain. The immediate electron acceptor for the enzyme in this species is believed to be plastoquinone. Couples the redox reaction to proton translocation, and thus conserves the redox energy in a proton gradient. Cyanobacterial NDH-1 also plays a role in inorganic carbon-concentration. The chain is NAD(P)H-quinone oxidoreductase subunit K from Trichormus variabilis (strain ATCC 29413 / PCC 7937) (Anabaena variabilis).